The primary structure comprises 224 residues: Methylamine utilization ferredoxin-type protein MauM (224 aa).

A signal peptide spans 1–41 (MEARMTGRRKVTRRDAMADAARAVGVACLGGFSLAALVRTA). 4 4Fe-4S ferredoxin-type domains span residues 54-84 (ALPEQDFLAACVHCGLCVQACPYGTLSLAEW), 91-124 (GTPFFTPREVPCYMCKDVPCARACPTGALDRDIP), 133-169 (VAVLVGHETCLNYKGLNCSICVRVCPIRGDAISLEPQ), and 177-208 (MIPVVHSASCTGCGTCEKQCVLGHAAIRVLPR). Positions 64, 67, 70, 74, 102, 105, 110, 114, 142, 150, 153, 157, 186, 189, 192, and 196 each coordinate [4Fe-4S] cluster.

The protein operates within one-carbon metabolism; methylamine degradation. In terms of biological role, involved in electron transfer. The polypeptide is Methylamine utilization ferredoxin-type protein MauM (mauM) (Paracoccus denitrificans (strain Pd 1222)).